The chain runs to 121 residues: Large ribosomal subunit protein bL19 (121 aa).

Belongs to the bacterial ribosomal protein bL19 family.

Its function is as follows. This protein is located at the 30S-50S ribosomal subunit interface and may play a role in the structure and function of the aminoacyl-tRNA binding site. In Borreliella burgdorferi (strain ZS7) (Borrelia burgdorferi), this protein is Large ribosomal subunit protein bL19.